The following is a 468-amino-acid chain: Monogalactosyldiacylglycerol synthase 2, chloroplastic (468 aa).

Residues His-82, Arg-251, 361 to 365 (GTIAE), and Glu-383 each bind UDP.

Belongs to the glycosyltransferase 28 family. As to expression, expressed mainly in floral buds. Detected in roots, leaves, stems, siliques and pollen tubes.

The protein resides in the plastid. The protein localises to the chloroplast outer membrane. It catalyses the reaction a 1,2-diacyl-sn-glycerol + UDP-alpha-D-galactose = a 1,2-diacyl-3-O-(beta-D-galactosyl)-sn-glycerol + UDP + H(+). The enzyme catalyses 1,2-di-(9Z,12Z-octadecadienoyl)-sn-glycerol + UDP-alpha-D-galactose = 1,2-di-(9Z,12Z-octadecadienoyl)-3-beta-D-galactosyl-sn-glycerol + UDP + H(+). The catalysed reaction is 1-(9Z-octadecenoyl)-2-hexadecanoyl-sn-glycerol + UDP-alpha-D-galactose = 1-(9Z-octadecenoyl)-2-hexadecanoyl-3-beta-D-galactosyl-sn-glycerol + UDP + H(+). It carries out the reaction 1,2-di-(9Z-octadecenoyl)-sn-glycerol + UDP-alpha-D-galactose = 1,2-di-(9Z-octadecenoyl)-3-beta-D-galactosyl-sn-glycerol + UDP + H(+). With respect to regulation, inhibited by galvestine-1. In terms of biological role, involved in the synthesis of monogalactosyldiacylglycerol, the major structural component of photosynthetic membranes and in the chloroplast envelope biogenesis. Can use both prokaryotic (18:1/16:0) or eukaryotic (18:2/18:2) 1,2-diacylglycerol species, but operates with some preference for the eukaryotic one. Plays a minor role in galactolipid synthesis in chloroplasts. Is required for membrane lipid remodeling in phosphate-starved roots. Acts as the minor factor involved in digalactosyldiacylglycerol (DGDG) biosynthesis in phosphate-starved roots. Does not seem to be required for plant growth under nutrient-sufficient conditions. Required for membrane lipid remodeling in plants grown in acidic conditions. The protein is Monogalactosyldiacylglycerol synthase 2, chloroplastic of Arabidopsis thaliana (Mouse-ear cress).